The sequence spans 97 residues: M-zodatoxin-Lt7a (97 aa).

The signal sequence occupies residues 1–22; it reads MKFYVVALALLVAFVCIAESRS. Residues 23–63 constitute a propeptide that is removed on maturation; sequence VETERAVDADLEDDLDDLEEYLEGIAEALELEDFPDTEEAR. The short motif at 60–63 is the Processing quadruplet motif element; that stretch reads EEAR.

In terms of processing, cleavage of the propeptide depends on the processing quadruplet motif (XXXR, with at least one of X being E). As to expression, expressed by the venom gland.

It localises to the secreted. In terms of biological role, does not have antimicrobial or antifungal activity. Does not have hemolytic activity against rabbit erythrocytes. However, it causes some conductance changes in planar bilayer membranes, without membrane rupture, suggesting a cytolytic function on other biological targets. It causes paralysis, but is not lethal when injected into insect (M.domestica) larvae. The polypeptide is M-zodatoxin-Lt7a (Lachesana tarabaevi (Spider)).